Here is a 277-residue protein sequence, read N- to C-terminus: Glutamate racemase (277 aa).

Substrate-binding positions include 16–17 (DS) and 48–49 (YG). Cys79 functions as the Proton donor/acceptor in the catalytic mechanism. 80 to 81 (NT) provides a ligand contact to substrate. The active-site Proton donor/acceptor is Cys191. A substrate-binding site is contributed by 192-193 (TH).

Belongs to the aspartate/glutamate racemases family.

It carries out the reaction L-glutamate = D-glutamate. Its pathway is cell wall biogenesis; peptidoglycan biosynthesis. Functionally, provides the (R)-glutamate required for cell wall biosynthesis. This is Glutamate racemase from Symbiobacterium thermophilum (strain DSM 24528 / JCM 14929 / IAM 14863 / T).